The sequence spans 202 residues: Peptide deformylase 2 (202 aa).

Fe cation is bound by residues Cys120 and His162. Residue Glu163 is part of the active site. His166 contributes to the Fe cation binding site.

It belongs to the polypeptide deformylase family. Requires Fe(2+) as cofactor.

The catalysed reaction is N-terminal N-formyl-L-methionyl-[peptide] + H2O = N-terminal L-methionyl-[peptide] + formate. Functionally, removes the formyl group from the N-terminal Met of newly synthesized proteins. Requires at least a dipeptide for an efficient rate of reaction. N-terminal L-methionine is a prerequisite for activity but the enzyme has broad specificity at other positions. The protein is Peptide deformylase 2 of Rickettsia conorii (strain ATCC VR-613 / Malish 7).